We begin with the raw amino-acid sequence, 387 residues long: Sorting nexin-7 (387 aa).

A PX domain is found at 30–151; the sequence is KDLFITVDAP…VFLTAQAEEL (122 aa). Residues Arg-73, Gln-75, Lys-103, and Arg-117 each coordinate a 1,2-diacyl-sn-glycero-3-phospho-(1D-myo-inositol-3-phosphate). Residues 178 to 387 enclose the BAR domain; sequence GVKNRPEEFM…PSEEDSEEKL (210 aa).

Belongs to the sorting nexin family. In terms of assembly, heterodimer; heterodimerizes with SNX4.

Its subcellular location is the early endosome membrane. In terms of biological role, involved in the regulation of endocytosis and in several stages of intracellular trafficking. Together with SNX4, involved in autophagosome assembly by regulating trafficking and recycling of phospholipid scramblase ATG9A. This Mus musculus (Mouse) protein is Sorting nexin-7.